A 141-amino-acid chain; its full sequence is Large ribosomal subunit protein uL11 (141 aa).

This sequence belongs to the universal ribosomal protein uL11 family. As to quaternary structure, part of the ribosomal stalk of the 50S ribosomal subunit. Interacts with L10 and the large rRNA to form the base of the stalk. L10 forms an elongated spine to which L12 dimers bind in a sequential fashion forming a multimeric L10(L12)X complex. Post-translationally, one or more lysine residues are methylated.

Forms part of the ribosomal stalk which helps the ribosome interact with GTP-bound translation factors. In Streptococcus agalactiae serotype Ia (strain ATCC 27591 / A909 / CDC SS700), this protein is Large ribosomal subunit protein uL11.